The chain runs to 720 residues: Heat shock protein homolog pss1 (720 aa).

A Phosphoserine modification is found at serine 38. Threonine 39 is modified (phosphothreonine). Residues 658–690 are compositionally biased toward basic and acidic residues; sequence KRQKVQAEREAAKAATKSEAEKQKPSGKFEEGT. Residues 658–720 form a disordered region; the sequence is KRQKVQAERE…ETMEIDEQKE (63 aa). The span at 703 to 720 shows a compositional bias: acidic residues; that stretch reads VAPENEEVETMEIDEQKE.

It belongs to the heat shock protein 70 family.

The protein resides in the cytoplasm. In terms of biological role, required for normal growth at various temperatures. The chain is Heat shock protein homolog pss1 (pss1) from Schizosaccharomyces pombe (strain 972 / ATCC 24843) (Fission yeast).